Reading from the N-terminus, the 379-residue chain is Subtilisin Carlsberg (379 aa).

The N-terminal stretch at 1-29 is a signal peptide; that stretch reads MMRKKSFWLGMLTAFMLVFTMAFSDSASA. Residues 30–105 constitute a propeptide that is removed on maturation; that stretch reads AQPAKNVEKD…VEEDHVAHAL (76 aa). Residues 44–102 form the Inhibitor I9 domain; the sequence is FKSGVKTASVKKDIIKESGGKVDKQFRIINAAKAKLDKEALKEVKNDPDVAYVEEDHVA. Q107 contacts Ca(2+). The 269-residue stretch at 110-378 folds into the Peptidase S8 domain; sequence PYGIPLIKAD…KGLINVEAAA (269 aa). D137 (charge relay system) is an active-site residue. A Ca(2+)-binding site is contributed by D146. H168 acts as the Charge relay system in catalysis. Ca(2+)-binding residues include L179, N181, T183, V185, A273, Y275, and V278. Residue S325 is the Charge relay system of the active site.

This sequence belongs to the peptidase S8 family. Ca(2+) is required as a cofactor.

Its subcellular location is the secreted. The catalysed reaction is Hydrolysis of proteins with broad specificity for peptide bonds, and a preference for a large uncharged residue in P1. Hydrolyzes peptide amides.. Inhibited by p-chlorophenyl and 1-naphthyl boronic acid derivatives. Functionally, subtilisin is an extracellular alkaline serine protease, it catalyzes the hydrolysis of proteins and peptide amides. Shows high specificity for aromatic and hydrophobic amino acids in the P1 substrate position. May play an important role in the degradation of feather keratin. This chain is Subtilisin Carlsberg, found in Bacillus licheniformis.